A 131-amino-acid polypeptide reads, in one-letter code: ATP synthase epsilon chain (131 aa).

This sequence belongs to the ATPase epsilon chain family. F-type ATPases have 2 components, CF(1) - the catalytic core - and CF(0) - the membrane proton channel. CF(1) has five subunits: alpha(3), beta(3), gamma(1), delta(1), epsilon(1). CF(0) has three main subunits: a, b and c.

It localises to the cell inner membrane. Functionally, produces ATP from ADP in the presence of a proton gradient across the membrane. In Helicobacter hepaticus (strain ATCC 51449 / 3B1), this protein is ATP synthase epsilon chain.